Reading from the N-terminus, the 405-residue chain is Argininosuccinate synthase (405 aa).

ATP contacts are provided by residues 10-18 (AYSGGLDTS) and alanine 37. Residues tyrosine 88 and serine 93 each coordinate L-citrulline. Glycine 118 is an ATP binding site. L-aspartate is bound by residues threonine 120, asparagine 124, and aspartate 125. An L-citrulline-binding site is contributed by asparagine 124. L-citrulline is bound by residues arginine 128, serine 179, serine 188, glutamate 264, and tyrosine 276.

It belongs to the argininosuccinate synthase family. Type 1 subfamily. As to quaternary structure, homotetramer.

It is found in the cytoplasm. It catalyses the reaction L-citrulline + L-aspartate + ATP = 2-(N(omega)-L-arginino)succinate + AMP + diphosphate + H(+). The protein operates within amino-acid biosynthesis; L-arginine biosynthesis; L-arginine from L-ornithine and carbamoyl phosphate: step 2/3. This is Argininosuccinate synthase from Pseudomonas fluorescens (strain Pf0-1).